The chain runs to 351 residues: Alcohol dehydrogenase 2 (351 aa).

Cys-47, His-70, Cys-101, Cys-104, Cys-107, Cys-115, and Cys-157 together coordinate Zn(2+). NAD(+)-binding positions include Gly-181–Gly-187, Asp-205, Lys-209, Val-271–Leu-273, and Arg-343.

It belongs to the zinc-containing alcohol dehydrogenase family. As to quaternary structure, homotetramer. The cofactor is Zn(2+).

It catalyses the reaction a primary alcohol + NAD(+) = an aldehyde + NADH + H(+). It carries out the reaction a secondary alcohol + NAD(+) = a ketone + NADH + H(+). The protein is Alcohol dehydrogenase 2 (sodh-2) of Caenorhabditis elegans.